The following is a 93-amino-acid chain: Envelope small membrane protein (93 aa).

Over M1–E11 the chain is Virion surface. A helical transmembrane segment spans residues N12 to G32. Residues R33–Q93 lie on the Intravirion side of the membrane.

This sequence belongs to the gammacoronaviruses E protein family. In terms of assembly, homooligomer. Interacts with the M membrane protein in the budding compartment of the host cell, which is located between endoplasmic reticulum and the Golgi complex. The cytoplasmic tails of both proteins are important for this function. Interacts with Nucleoprotein.

The protein resides in the host Golgi apparatus membrane. Its function is as follows. Plays a central role in virus morphogenesis and assembly. Acts as a viroporin and self-assembles in host membranes forming pentameric protein-lipid pores that allow ion transport. Also plays a role in the induction of apoptosis. The polypeptide is Envelope small membrane protein (Avian infectious bronchitis virus (strain Portugal/322/82) (IBV)).